The sequence spans 455 residues: Inactive peptidyl-prolyl cis-trans isomerase shutdown (455 aa).

The segment at S34–D54 is disordered. Positions L44–D54 are enriched in acidic residues. Positions K103–S192 constitute a PPIase FKBP-type domain. TPR repeat units lie at residues A218–C251 and C303–N336.

Belongs to the FKBP6 family. In terms of assembly, interacts with Hsp83. In terms of tissue distribution, strongly expressed in the germline stem cells and in 16-cell cysts. Present in the germ cells throughout embryogenesis. Defects are due to derepression of transposable elements and impaired piRNA biogenesis.

Its subcellular location is the cytoplasm. It localises to the cytoplasmic ribonucleoprotein granule. In terms of biological role, co-chaperone required during oogenesis to repress transposable elements and prevent their mobilization, which is essential for the germline integrity. Acts via the piRNA metabolic process, which mediates the repression of transposable elements during meiosis by forming complexes composed of piRNAs and Piwi proteins and govern the methylation and subsequent repression of transposons. Acts as a co-chaperone via its interaction with Hsp83/HSP90 and is required for the biogenesis of all three piRNA major populations. The sequence is that of Inactive peptidyl-prolyl cis-trans isomerase shutdown from Drosophila melanogaster (Fruit fly).